Reading from the N-terminus, the 201-residue chain is Nucleoside triphosphate pyrophosphatase (201 aa).

Asp-77 serves as the catalytic Proton acceptor.

Belongs to the Maf family. A divalent metal cation serves as cofactor.

Its subcellular location is the cytoplasm. The catalysed reaction is a ribonucleoside 5'-triphosphate + H2O = a ribonucleoside 5'-phosphate + diphosphate + H(+). It carries out the reaction a 2'-deoxyribonucleoside 5'-triphosphate + H2O = a 2'-deoxyribonucleoside 5'-phosphate + diphosphate + H(+). Its function is as follows. Nucleoside triphosphate pyrophosphatase. May have a dual role in cell division arrest and in preventing the incorporation of modified nucleotides into cellular nucleic acids. This chain is Nucleoside triphosphate pyrophosphatase, found in Rickettsia akari (strain Hartford).